The chain runs to 423 residues: Aspartic protease-like protein pytH (423 aa).

An N-terminal signal peptide occupies residues methionine 1–alanine 16. One can recognise a Peptidase A1 domain in the interval threonine 38 to alanine 416. Aspartate 56 is an active-site residue. Asparagine 88, asparagine 97, asparagine 168, asparagine 196, asparagine 231, and asparagine 279 each carry an N-linked (GlcNAc...) asparagine glycan. The active site involves aspartate 291. N-linked (GlcNAc...) asparagine glycosylation is present at asparagine 330. Cysteine 338 and cysteine 377 form a disulfide bridge.

The protein belongs to the peptidase A1 family.

It functions in the pathway secondary metabolite biosynthesis. Functionally, aspartic protease-like protein; part of the gene cluster that mediates the biosynthesis of pyranterreones, a family of antioxidative compounds. The first step of pyranonigrins biosynthesis is performed by the hybrid PKS-NRPS synthetase pytA that condenses 4 malonyl-CoA units ato the acetyl starter unit by the modular PKS of pytA. The acyl chain is then connected to an L-serine through the amide bond by the modular NRPS of pytA. A tetramic acid is formed and released from the PKS-NRPS pytA to give pyranterreone 5 with the help of the thioesterase pytI. Pyranterreone 5 could be methylated by pytC to afford pyranterreone 6. Both pyranterreones 5 and 6 are subsequently oxidized by the FAD-linked oxidoreductase pytB and the cytochrome P450 monooxygenase pytD to form the fused gamma-pyrone core, resulting in pyranterreones 7 and 11, respectively. The hydroxy group at C-8 of pyranterreones 7 and 11 are dehydrated by the aspartyl protease pytH to form a delta-7 double bond to give pyranterreones 3 and 1, 2 accordingly. The exo-methylene of pyranterreone 3 could be reduced into a pendant methyl by reductase pytE to provide pyranterreone 4, also known as cordylactam. Pyranterreone 4 can be reconverted to pyranterreone 3 through pytB-catalyzed dehydrogenation or further oxidized to pyranterreones 9 and 10. The protein is Aspartic protease-like protein pytH of Aspergillus terreus (strain NIH 2624 / FGSC A1156).